The sequence spans 541 residues: Chaperonin GroEL 1 (541 aa).

ATP-binding positions include 29–32 (TLGP), 86–90 (DGTTT), Gly-413, 477–479 (NAA), and Asp-493.

It belongs to the chaperonin (HSP60) family. In terms of assembly, forms a cylinder of 14 subunits composed of two heptameric rings stacked back-to-back. Interacts with the co-chaperonin GroES.

It localises to the cytoplasm. It catalyses the reaction ATP + H2O + a folded polypeptide = ADP + phosphate + an unfolded polypeptide.. In terms of biological role, together with its co-chaperonin GroES, plays an essential role in assisting protein folding. The GroEL-GroES system forms a nano-cage that allows encapsulation of the non-native substrate proteins and provides a physical environment optimized to promote and accelerate protein folding. The protein is Chaperonin GroEL 1 of Paenarthrobacter aurescens (strain TC1).